We begin with the raw amino-acid sequence, 644 residues long: Chaperone protein DnaK (644 aa).

The residue at position 199 (Thr-199) is a Phosphothreonine; by autocatalysis. Residues 550 to 584 (ADKLDESEKQRAQDEIKRGREAMESGDLERMKASR) are compositionally biased toward basic and acidic residues. Disordered regions lie at residues 550-586 (ADKL…SRDS) and 599-644 (YSQA…EDKK). Residues 600–623 (SQAGPEQGAPGAEAGAGASQGASG) are compositionally biased toward low complexity.

Belongs to the heat shock protein 70 family.

Functionally, acts as a chaperone. This Leptospira biflexa serovar Patoc (strain Patoc 1 / Ames) protein is Chaperone protein DnaK.